A 772-amino-acid polypeptide reads, in one-letter code: Mitochondrial intermediate peptidase (772 aa).

A mitochondrion-targeting transit peptide spans 1–37 (MLRTIILKAGSNASIPSPSRQNKLLRFFATAGAVSRT). His-558 provides a ligand contact to Zn(2+). Glu-559 is an active-site residue. Residues His-562 and Glu-587 each contribute to the Zn(2+) site.

This sequence belongs to the peptidase M3 family. The cofactor is Zn(2+).

The protein resides in the mitochondrion matrix. The enzyme catalyses Release of an N-terminal octapeptide as second stage of processing of some proteins imported into the mitochondrion.. With respect to regulation, stimulated by Fe(2+). Functionally, cleaves proteins, imported into the mitochondrion, to their mature size. While most mitochondrial precursor proteins are processed to the mature form in one step by mitochondrial processing peptidase (MPP), the sequential cleavage by MIP of an octapeptide after initial processing by MPP is a required step for a subgroup of nuclear-encoded precursor proteins destined for the matrix or the inner membrane. Cleaves precursor proteins of respiratory components, including subunits of the electron transport chain and tricarboxylic acid cycle enzymes, and components of the mitochondrial genetic machinery, including ribosomal proteins, translation factors, and proteins required for mitochondrial DNA metabolism. The sequence is that of Mitochondrial intermediate peptidase (OCT1) from Saccharomyces cerevisiae (strain ATCC 204508 / S288c) (Baker's yeast).